The following is a 547-amino-acid chain: Chaperonin GroEL (547 aa).

Residues 30–33 (TLGP), K51, 87–91 (DGTTT), G415, and D496 contribute to the ATP site.

This sequence belongs to the chaperonin (HSP60) family. Forms a cylinder of 14 subunits composed of two heptameric rings stacked back-to-back. Interacts with the co-chaperonin GroES.

It is found in the cytoplasm. It carries out the reaction ATP + H2O + a folded polypeptide = ADP + phosphate + an unfolded polypeptide.. Its function is as follows. Together with its co-chaperonin GroES, plays an essential role in assisting protein folding. The GroEL-GroES system forms a nano-cage that allows encapsulation of the non-native substrate proteins and provides a physical environment optimized to promote and accelerate protein folding. In Chlorobium limicola (strain DSM 245 / NBRC 103803 / 6330), this protein is Chaperonin GroEL.